The chain runs to 367 residues: Anhydro-N-acetylmuramic acid kinase (367 aa).

Residue 11-18 participates in ATP binding; sequence GTSLDGVD.

It belongs to the anhydro-N-acetylmuramic acid kinase family.

The catalysed reaction is 1,6-anhydro-N-acetyl-beta-muramate + ATP + H2O = N-acetyl-D-muramate 6-phosphate + ADP + H(+). The protein operates within amino-sugar metabolism; 1,6-anhydro-N-acetylmuramate degradation. Its pathway is cell wall biogenesis; peptidoglycan recycling. Catalyzes the specific phosphorylation of 1,6-anhydro-N-acetylmuramic acid (anhMurNAc) with the simultaneous cleavage of the 1,6-anhydro ring, generating MurNAc-6-P. Is required for the utilization of anhMurNAc either imported from the medium or derived from its own cell wall murein, and thus plays a role in cell wall recycling. In Rhodopseudomonas palustris (strain HaA2), this protein is Anhydro-N-acetylmuramic acid kinase.